We begin with the raw amino-acid sequence, 882 residues long: Leucine--tRNA ligase (882 aa).

A 'HIGH' region motif is present at residues 43 to 53; sequence PYPSGNLHMGH. The 'KMSKS' region motif lies at 632-636; the sequence is TMSKS. Lys-635 is an ATP binding site.

Belongs to the class-I aminoacyl-tRNA synthetase family.

It is found in the cytoplasm. It catalyses the reaction tRNA(Leu) + L-leucine + ATP = L-leucyl-tRNA(Leu) + AMP + diphosphate. The polypeptide is Leucine--tRNA ligase (Synechococcus sp. (strain JA-2-3B'a(2-13)) (Cyanobacteria bacterium Yellowstone B-Prime)).